We begin with the raw amino-acid sequence, 321 residues long: Lipoyl synthase (321 aa).

7 residues coordinate [4Fe-4S] cluster: Cys-68, Cys-73, Cys-79, Cys-94, Cys-98, Cys-101, and Ser-308. A Radical SAM core domain is found at 80 to 297 (FNHGTATFMI…KEIALELGFT (218 aa)).

Belongs to the radical SAM superfamily. Lipoyl synthase family. [4Fe-4S] cluster serves as cofactor.

It is found in the cytoplasm. It carries out the reaction [[Fe-S] cluster scaffold protein carrying a second [4Fe-4S](2+) cluster] + N(6)-octanoyl-L-lysyl-[protein] + 2 oxidized [2Fe-2S]-[ferredoxin] + 2 S-adenosyl-L-methionine + 4 H(+) = [[Fe-S] cluster scaffold protein] + N(6)-[(R)-dihydrolipoyl]-L-lysyl-[protein] + 4 Fe(3+) + 2 hydrogen sulfide + 2 5'-deoxyadenosine + 2 L-methionine + 2 reduced [2Fe-2S]-[ferredoxin]. Its pathway is protein modification; protein lipoylation via endogenous pathway; protein N(6)-(lipoyl)lysine from octanoyl-[acyl-carrier-protein]: step 2/2. In terms of biological role, catalyzes the radical-mediated insertion of two sulfur atoms into the C-6 and C-8 positions of the octanoyl moiety bound to the lipoyl domains of lipoate-dependent enzymes, thereby converting the octanoylated domains into lipoylated derivatives. This is Lipoyl synthase from Vibrio cholerae serotype O1 (strain ATCC 39541 / Classical Ogawa 395 / O395).